Consider the following 510-residue polypeptide: Maturase K (510 aa).

The protein belongs to the intron maturase 2 family. MatK subfamily.

It localises to the plastid. The protein resides in the chloroplast. Functionally, usually encoded in the trnK tRNA gene intron. Probably assists in splicing its own and other chloroplast group II introns. This Penstemon heterophyllus (Foothill penstemon) protein is Maturase K.